The primary structure comprises 788 residues: Protein FAR1-RELATED SEQUENCE 12 (788 aa).

The FAR1 1 domain maps to 57–133 (EFYNAYAART…QKEHNHELGG (77 aa)). Positions 127-200 (HNHELGGEGS…GEVSDDHHQT (74 aa)) are disordered. Low complexity predominate over residues 142–151 (PRPSRAPAPT). Positions 165-175 (KVVDESDRETR) are enriched in basic and acidic residues. The FAR1 2 domain occupies 225–301 (QFYQAYAEVV…NKDHNHDLEP (77 aa)). One can recognise an MULE domain in the interval 399–495 (SVVFDTSYRK…SAWQIREKER (97 aa)). An SWIM-type zinc finger spans residues 674-710 (HAVTFSASNLNSSCSCQMFEHEGLLCRHILKVFNLLD).

The protein belongs to the FHY3/FAR1 family. As to expression, expressed in hypocotyls, rosette and cauline leaves, inflorescences stems, flowers and siliques.

The protein resides in the nucleus. Putative transcription activator involved in regulating light control of development. The chain is Protein FAR1-RELATED SEQUENCE 12 (FRS12) from Arabidopsis thaliana (Mouse-ear cress).